The chain runs to 488 residues: ATP synthase subunit beta (488 aa).

164-171 (GGAGVGKT) lines the ATP pocket.

The protein belongs to the ATPase alpha/beta chains family. F-type ATPases have 2 components, CF(1) - the catalytic core - and CF(0) - the membrane proton channel. CF(1) has five subunits: alpha(3), beta(3), gamma(1), delta(1), epsilon(1). CF(0) has four main subunits: a(1), b(1), b'(1) and c(9-12).

It is found in the cellular thylakoid membrane. The enzyme catalyses ATP + H2O + 4 H(+)(in) = ADP + phosphate + 5 H(+)(out). In terms of biological role, produces ATP from ADP in the presence of a proton gradient across the membrane. The catalytic sites are hosted primarily by the beta subunits. In Prochlorococcus marinus (strain MIT 9211), this protein is ATP synthase subunit beta.